The following is a 382-amino-acid chain: Kelch domain-containing protein 3 (382 aa).

5 Kelch repeats span residues Arg-25–Arg-77, Thr-88–Lys-138, Ile-139–Gly-189, His-191–Gly-249, and Leu-251–Asp-301.

As to quaternary structure, component of a CRL2(KLHDC3) complex, also named ECS(KLHDC3) complex, composed of CUL2, Elongin BC (ELOB and ELOC), RBX1 and substrate-specific adapter KLHDC3. May form oligomers as a KLHDC3-ELOB-ELOC complex; this interaction is likely autoinhibitory for the E3 ligase complex.

It is found in the cytoplasm. It functions in the pathway protein modification; protein ubiquitination. Functionally, substrate-recognition component of a Cul2-RING (CRL2) E3 ubiquitin-protein ligase complex of the DesCEND (destruction via C-end degrons) pathway, which recognizes a C-degron located at the extreme C terminus of target proteins, leading to their ubiquitination and degradation. The C-degron recognized by the DesCEND pathway is usually a motif of less than ten residues and can be present in full-length proteins, truncated proteins or proteolytically cleaved forms. The CRL2(KLHDC3) complex specifically recognizes proteins with a glycine (Gly) at the C-terminus, leading to their ubiquitination and degradation: recognizes the C-terminal -Arg-(Xaa)n-Arg-Gly, -Arg-(Xaa)n-Lys-Gly, and -Arg-(Xaa)n-Gln-Gly degrons. The CRL2(KLHDC3) complex mediates ubiquitination and degradation of truncated SELENOV and SEPHS2 selenoproteins produced by failed UGA/Sec decoding, which end with a glycine. May be involved in meiotic recombination process. This is Kelch domain-containing protein 3 from Homo sapiens (Human).